Consider the following 195-residue polypeptide: 7-methyl-GTP pyrophosphatase (195 aa).

Residue D70 is the Proton acceptor of the active site.

This sequence belongs to the Maf family. YceF subfamily. It depends on a divalent metal cation as a cofactor.

Its subcellular location is the cytoplasm. The catalysed reaction is N(7)-methyl-GTP + H2O = N(7)-methyl-GMP + diphosphate + H(+). Its function is as follows. Nucleoside triphosphate pyrophosphatase that hydrolyzes 7-methyl-GTP (m(7)GTP). May have a dual role in cell division arrest and in preventing the incorporation of modified nucleotides into cellular nucleic acids. This is 7-methyl-GTP pyrophosphatase from Shewanella sp. (strain MR-7).